Consider the following 504-residue polypeptide: Carnosic acid synthase (504 aa).

The chain crosses the membrane as a helical span at residues 4–24 (FIILSLAFIAAWVVYSRWSEY). Cys447 is a binding site for heme.

It belongs to the cytochrome P450 family. The cofactor is heme. Expressed in glandular trichomes of young leaves.

It is found in the membrane. The enzyme catalyses 11-hydroxyferruginol + 3 reduced [NADPH--hemoprotein reductase] + 3 O2 = carnosate + 3 oxidized [NADPH--hemoprotein reductase] + 4 H2O + 4 H(+). It catalyses the reaction miltiradiene + 2 reduced [NADPH--hemoprotein reductase] + 2 O2 = miltiradien-20-al + 2 oxidized [NADPH--hemoprotein reductase] + 3 H2O + 2 H(+). It carries out the reaction ferruginol + 3 reduced [NADPH--hemoprotein reductase] + 3 O2 = pisiferate + 3 oxidized [NADPH--hemoprotein reductase] + 4 H2O + 4 H(+). It participates in secondary metabolite biosynthesis; terpenoid biosynthesis. Functionally, monooxygenase involved in the biosynthesis of carnosate, a potent antioxidant labdane-related diterpene natural products. Catalyzes the oxidation of 11-hydroxyferruginol to produce carnosate. Mediates the conversion of miltiradien into miltiradien-20-al. Also involved in the production of pisiferic acid and derivative products from ferruginol. This chain is Carnosic acid synthase, found in Rosmarinus officinalis (Rosemary).